The chain runs to 196 residues: HTH-type transcriptional regulator BetI (196 aa).

The HTH tetR-type domain maps to 8-68; that stretch reads PIRRSQLIAA…ATMRHLMQAL (61 aa). Positions 31-50 form a DNA-binding region, H-T-H motif; that stretch reads SIAYIARLAGVSNGIISHYF.

The protein operates within amine and polyamine biosynthesis; betaine biosynthesis via choline pathway [regulation]. Repressor involved in the biosynthesis of the osmoprotectant glycine betaine. It represses transcription of the choline transporter BetT and the genes of BetAB involved in the synthesis of glycine betaine. In Ectopseudomonas mendocina (strain ymp) (Pseudomonas mendocina), this protein is HTH-type transcriptional regulator BetI.